Reading from the N-terminus, the 150-residue chain is Large ribosomal subunit protein bL9 (150 aa).

This sequence belongs to the bacterial ribosomal protein bL9 family.

In terms of biological role, binds to the 23S rRNA. This is Large ribosomal subunit protein bL9 from Streptococcus pyogenes serotype M6 (strain ATCC BAA-946 / MGAS10394).